Here is a 217-residue protein sequence, read N- to C-terminus: uncharacterized protein (217 aa).

This sequence to M.tuberculosis Rv2926c.

This is an uncharacterized protein from Mycobacterium leprae (strain TN).